Reading from the N-terminus, the 543-residue chain is Bifunctional riboflavin biosynthesis protein RIBA 1, chloroplastic (543 aa).

The transit peptide at 1-56 directs the protein to the chloroplast; that stretch reads MSSINLSSSSPSTISLSRSRLSQSSTTLLHGLHRVTLPSNHPLSTFSIKTNTGKVK. Residues 57 to 328 are DHBP synthase; sequence AAVISREDDL…IADLIRYRRK (272 aa). Residues 152–153, Asp-157, 267–271, and Glu-291 contribute to the D-ribulose 5-phosphate site; these read RE and RAGHT. Mg(2+) is bound at residue Glu-153. His-270 serves as a coordination point for Mg(2+). Residues 329-543 form a GTP cyclohydrolase II region; the sequence is RDKLVERASA…VEKIESESES (215 aa). 379-383 provides a ligand contact to GTP; that stretch reads RVHSE. Residues Cys-384, Cys-395, and Cys-397 each contribute to the Zn(2+) site. GTP is bound by residues Gln-400, 423–425, and Thr-445; that span reads EGR. Asp-457 serves as the catalytic Proton acceptor; for GTP cyclohydrolase activity. The Nucleophile; for GTP cyclohydrolase activity role is filled by Arg-459. GTP is bound by residues Thr-480 and Lys-485.

The protein in the N-terminal section; belongs to the DHBP synthase family. In the C-terminal section; belongs to the GTP cyclohydrolase II family. The cofactor is Mg(2+). Requires Mn(2+) as cofactor. Zn(2+) serves as cofactor. In terms of tissue distribution, expressed in leaves, shoots, roots, flowers and siliques.

It is found in the plastid. Its subcellular location is the chloroplast. It carries out the reaction D-ribulose 5-phosphate = (2S)-2-hydroxy-3-oxobutyl phosphate + formate + H(+). The enzyme catalyses GTP + 4 H2O = 2,5-diamino-6-hydroxy-4-(5-phosphoribosylamino)-pyrimidine + formate + 2 phosphate + 3 H(+). The protein operates within cofactor biosynthesis; riboflavin biosynthesis; 2-hydroxy-3-oxobutyl phosphate from D-ribulose 5-phosphate: step 1/1. It functions in the pathway cofactor biosynthesis; riboflavin biosynthesis; 5-amino-6-(D-ribitylamino)uracil from GTP: step 1/4. Its function is as follows. Involved in riboflavin biosynthesis. Catalyzes both the conversion of D-ribulose 5-phosphate to formate and 3,4-dihydroxy-2-butanone 4-phosphate and the conversion of GTP to 2,5-diamino-6-ribosylamino-4(3H)-pyrimidinone 5'-phosphate (DARP), formate and pyrophosphate. RIBA2 and RIBA3 together are not able to complement the loss of function of RIBA1. The protein is Bifunctional riboflavin biosynthesis protein RIBA 1, chloroplastic (RIBA1) of Arabidopsis thaliana (Mouse-ear cress).